The following is a 134-amino-acid chain: MSEAVTIRTRKFMTNRLLQRKQMVVDILHPGKANISKNDLREKLGQMYKTDASAVQAFGLRTHYGGGRTTGFALIYDDVEAMKKFEPHYRLVRVGHAEPIQKVARQQRKQRKNRGKKVFGTGKRLAKRKSKQQD.

S2 carries the post-translational modification N-acetylserine. A disordered region spans residues 100–134 (IQKVARQQRKQRKNRGKKVFGTGKRLAKRKSKQQD). Composition is skewed to basic residues over residues 105-117 (RQQR…RGKK) and 124-134 (RLAKRKSKQQD).

It belongs to the eukaryotic ribosomal protein eS24 family. As to quaternary structure, component of the small ribosomal subunit (SSU). Mature yeast ribosomes consist of a small (40S) and a large (60S) subunit. The 40S small subunit contains 1 molecule of ribosomal RNA (18S rRNA) and at least 33 different proteins. The large 60S subunit contains 3 rRNA molecules (25S, 5.8S and 5S rRNA) and at least 46 different proteins.

It localises to the cytoplasm. In terms of biological role, component of the ribosome, a large ribonucleoprotein complex responsible for the synthesis of proteins in the cell. The small ribosomal subunit (SSU) binds messenger RNAs (mRNAs) and translates the encoded message by selecting cognate aminoacyl-transfer RNA (tRNA) molecules. The large subunit (LSU) contains the ribosomal catalytic site termed the peptidyl transferase center (PTC), which catalyzes the formation of peptide bonds, thereby polymerizing the amino acids delivered by tRNAs into a polypeptide chain. The nascent polypeptides leave the ribosome through a tunnel in the LSU and interact with protein factors that function in enzymatic processing, targeting, and the membrane insertion of nascent chains at the exit of the ribosomal tunnel. This is Small ribosomal subunit protein eS24A (rps2401) from Schizosaccharomyces pombe (strain 972 / ATCC 24843) (Fission yeast).